Reading from the N-terminus, the 130-residue chain is Prefoldin subunit alpha (130 aa).

This sequence belongs to the prefoldin subunit alpha family. Heterohexamer of two alpha and four beta subunits.

The protein resides in the cytoplasm. Functionally, molecular chaperone capable of stabilizing a range of proteins. Seems to fulfill an ATP-independent, HSP70-like function in archaeal de novo protein folding. The chain is Prefoldin subunit alpha from Thermoplasma volcanium (strain ATCC 51530 / DSM 4299 / JCM 9571 / NBRC 15438 / GSS1).